The following is a 379-amino-acid chain: Probable malonyl-CoA-acyl carrier protein transacylase, mitochondrial (379 aa).

The transit peptide at 1 to 23 (MLAARRLLRSPRITGALSWSRWS) directs the protein to the mitochondrion. Catalysis depends on residues S158 and H275.

This sequence belongs to the type II malonyltransferase family.

The protein resides in the mitochondrion. It catalyses the reaction holo-[ACP] + malonyl-CoA = malonyl-[ACP] + CoA. The protein operates within lipid metabolism; fatty acid biosynthesis. Its function is as follows. Catalyzes the transfer of a malonyl moiety from malonyl-CoA to the free thiol group of the phosphopantetheine arm of the ACP protein. This suggests the existence of the biosynthesis of fatty acids in mitochondria. This chain is Probable malonyl-CoA-acyl carrier protein transacylase, mitochondrial, found in Drosophila melanogaster (Fruit fly).